A 463-amino-acid chain; its full sequence is Argininosuccinate lyase (463 aa).

Belongs to the lyase 1 family. Argininosuccinate lyase subfamily.

Its subcellular location is the cytoplasm. It carries out the reaction 2-(N(omega)-L-arginino)succinate = fumarate + L-arginine. The protein operates within amino-acid biosynthesis; L-arginine biosynthesis; L-arginine from L-ornithine and carbamoyl phosphate: step 3/3. The polypeptide is Argininosuccinate lyase (Prochlorococcus marinus (strain NATL1A)).